The chain runs to 324 residues: DNA repair and recombination protein RadA (324 aa).

Residue 114–121 (GEFGSGKT) participates in ATP binding.

This sequence belongs to the eukaryotic RecA-like protein family.

Involved in DNA repair and in homologous recombination. Binds and assemble on single-stranded DNA to form a nucleoprotein filament. Hydrolyzes ATP in a ssDNA-dependent manner and promotes DNA strand exchange between homologous DNA molecules. In Metallosphaera sedula (strain ATCC 51363 / DSM 5348 / JCM 9185 / NBRC 15509 / TH2), this protein is DNA repair and recombination protein RadA.